The chain runs to 595 residues: Pectinesterase 5 (595 aa).

An N-terminal signal peptide occupies residues 1–24 (MIGKVVVSVASILLIVGVAIGVVA). 2 N-linked (GlcNAc...) asparagine glycosylation sites follow: Asn-86 and Asn-206. The interval 215–239 (SDKGAAPVNKGTPPVADDSPVADPD) is disordered. Residues 227–239 (PPVADDSPVADPD) are compositionally biased toward low complexity. Positions 243–246 (RRLL) match the RRLL cleavage motif motif. An RKLM cleavage motif motif is present at residues 263-266 (RKLM). N-linked (GlcNAc...) asparagine glycosylation is present at Asn-349. The substrate site is built by Thr-360 and Gln-390. The active-site Proton donor is Asp-413. Asp-434 functions as the Nucleophile in the catalytic mechanism. Residues Arg-503 and Trp-505 each contribute to the substrate site.

This sequence in the N-terminal section; belongs to the PMEI family. In the C-terminal section; belongs to the pectinesterase family. In terms of assembly, interacts with SBT6.1. Expressed in pollen grains and pollen tubes.

It localises to the cell membrane. It is found in the secreted. Its subcellular location is the cell wall. The protein localises to the golgi apparatus membrane. The catalysed reaction is [(1-&gt;4)-alpha-D-galacturonosyl methyl ester](n) + n H2O = [(1-&gt;4)-alpha-D-galacturonosyl](n) + n methanol + n H(+). It functions in the pathway glycan metabolism; pectin degradation; 2-dehydro-3-deoxy-D-gluconate from pectin: step 1/5. Its function is as follows. Acts in the modification of cell walls via demethylesterification of cell wall pectin. Plays an important role in growth of pollen tubes in female floral tissues, possibly via enhancing the interaction between the pollen tube and female floral tissues by modification of the cell walls. May be regulated by MYB80 during anther development and play a role in tapetum and pollen development. The polypeptide is Pectinesterase 5 (PME5) (Arabidopsis thaliana (Mouse-ear cress)).